The primary structure comprises 171 residues: Lipoprotein signal peptidase (171 aa).

The next 4 helical transmembrane spans lie at leucine 12–phenylalanine 32, isoleucine 42–serine 62, tryptophan 70–leucine 90, and asparagine 96–tyrosine 116. Active-site residues include aspartate 126 and aspartate 145. Residues tyrosine 137 to leucine 157 form a helical membrane-spanning segment.

This sequence belongs to the peptidase A8 family.

The protein resides in the cell inner membrane. The enzyme catalyses Release of signal peptides from bacterial membrane prolipoproteins. Hydrolyzes -Xaa-Yaa-Zaa-|-(S,diacylglyceryl)Cys-, in which Xaa is hydrophobic (preferably Leu), and Yaa (Ala or Ser) and Zaa (Gly or Ala) have small, neutral side chains.. It participates in protein modification; lipoprotein biosynthesis (signal peptide cleavage). Functionally, this protein specifically catalyzes the removal of signal peptides from prolipoproteins. The sequence is that of Lipoprotein signal peptidase from Pseudomonas putida (strain ATCC 47054 / DSM 6125 / CFBP 8728 / NCIMB 11950 / KT2440).